The primary structure comprises 558 residues: Membrane protein insertase YidC (558 aa).

6 helical membrane passes run 5-25, 332-352, 355-375, 429-449, 474-494, and 520-540; these read IINL…WQYF, AIDF…MNFF, YVGN…LLMF, LPIL…YVTI, LFGL…WPIL, and FMPL…LIYW.

Belongs to the OXA1/ALB3/YidC family. Type 1 subfamily. As to quaternary structure, interacts with the Sec translocase complex via SecD. Specifically interacts with transmembrane segments of nascent integral membrane proteins during membrane integration.

Its subcellular location is the cell inner membrane. In terms of biological role, required for the insertion and/or proper folding and/or complex formation of integral membrane proteins into the membrane. Involved in integration of membrane proteins that insert both dependently and independently of the Sec translocase complex, as well as at least some lipoproteins. Aids folding of multispanning membrane proteins. The sequence is that of Membrane protein insertase YidC from Rickettsia typhi (strain ATCC VR-144 / Wilmington).